The sequence spans 464 residues: Cytochrome P450 85A1 (464 aa).

A helical membrane pass occupies residues 2–22 (AFFLIFLSSFFGLCIFCTALL). Heme is bound at residue Cys414.

The protein belongs to the cytochrome P450 family. Heme serves as cofactor. As to expression, expressed in sub-meristematic regions of shoot and root apexes, in zones undergoing lateral root formation, in fruits, and in all flower parts, with a high expression in young flower buds and at the joint in the pedicel.

It is found in the membrane. It carries out the reaction 6-deoxocastasterone + reduced [NADPH--hemoprotein reductase] + O2 = 6alpha-hydroxycastasterone + oxidized [NADPH--hemoprotein reductase] + H2O + H(+). The catalysed reaction is 6alpha-hydroxycastasterone + reduced [NADPH--hemoprotein reductase] + O2 = castasterone + oxidized [NADPH--hemoprotein reductase] + 2 H2O + H(+). The enzyme catalyses 6-deoxocastasterone + 2 reduced [NADPH--hemoprotein reductase] + 2 O2 = castasterone + 2 oxidized [NADPH--hemoprotein reductase] + 3 H2O + 2 H(+). Its pathway is plant hormone biosynthesis; brassinosteroid biosynthesis. Catalyzes the C6-oxidation step in brassinosteroids biosynthesis. Converts 6-deoxocastasterone (6-deoxoCS) to castasterone (CS). May also convert 6-deoxoteasterone (6-deoxoTE) to teasterone (TE), 3-dehydro-6-deoxoteasterone (6-deoxo3DT, 6-deoxo3DHT) to 3-dehydroteasterone (3DT, 3-DHT), and 6-deoxotyphasterol (6-deoxoTY) to typhasterol (TY), but not castasterone (CS) to brassinolide (BL). In Solanum lycopersicum (Tomato), this protein is Cytochrome P450 85A1.